A 211-amino-acid chain; its full sequence is Adenylate kinase (211 aa).

An ATP-binding site is contributed by 10 to 15 (GSGKGT). Residues 30–59 (STGDLFRENILNSTTLGKEIKKIVEKGELV) are NMP. AMP is bound by residues threonine 31, arginine 36, 57-59 (ELV), 85-88 (GFPR), and glutamine 92. The LID stretch occupies residues 121–158 (GRRICKSCNNIFNIYTLATKKNGICDVCKGDLYQREDD). Arginine 122 serves as a coordination point for ATP. Cysteine 125 and cysteine 128 together coordinate Zn(2+). An ATP-binding site is contributed by 131-132 (IF). Positions 145 and 148 each coordinate Zn(2+). Positions 155 and 166 each coordinate AMP. Position 194 (valine 194) interacts with ATP.

Belongs to the adenylate kinase family. Monomer.

Its subcellular location is the cytoplasm. The catalysed reaction is AMP + ATP = 2 ADP. It functions in the pathway purine metabolism; AMP biosynthesis via salvage pathway; AMP from ADP: step 1/1. In terms of biological role, catalyzes the reversible transfer of the terminal phosphate group between ATP and AMP. Plays an important role in cellular energy homeostasis and in adenine nucleotide metabolism. The protein is Adenylate kinase of Borrelia garinii subsp. bavariensis (strain ATCC BAA-2496 / DSM 23469 / PBi) (Borreliella bavariensis).